The chain runs to 617 residues: MPAYRSRTSTHGRNMAGARGLWRATGMKDGDFGKPIIAVVNSFTQFVPGHVHLKDLGQLVAREIEKAGGVAKEFNTIAVDDGIAMGHDGMLYSLPSREIIADSVEYMVNAHCADAMVCISNCDKITPGMLMAAMRLNIPAVFVSGGPMEAGKVLLSTGEKKVDLIDAMIAAADDRVSDEDVKVMERSACPTCGSCSGMFTANSMNCLTEALGLALPGNGSVLATHADRERLFVEAGHLVVDLARRYYEQDDAGVLPRTIASFKAFENAMTLDISMGGSTNTVLHLLAAANEGEVPFTMADIDRLSRKVPVLCKVAPAVANIHMEDVHRAGGIMGILGELDRAGLIHTDLPTVHAPSMKDALERWDVTRTKAESVTTFYRAAPGGVPTQVAFSQSRRWDDLDTDRASGVIRDFEHAYSKDGGLAVLFGNIAEDGCIVKTAGVDASILKFTGPARIFESQDAAVEAILANGKIKAGDIVLIRYEGPRGGPGMQEMLYPTSYLKSKGLGKACALVTDGRFSGGSSGLSIGHVSPEAAEGGAIGLVEEGDTIEIDIPNRRIHLAISDEEMARRRAAMEAKGDAAWKPKDRQRVVSQALQAYAALTTSAARGAVRDVKSLRR.

Aspartate 81 contacts Mg(2+). Cysteine 122 is a [2Fe-2S] cluster binding site. The Mg(2+) site is built by aspartate 123 and lysine 124. N6-carboxylysine is present on lysine 124. A [2Fe-2S] cluster-binding site is contributed by cysteine 195. Glutamate 492 contacts Mg(2+). Residue serine 518 is the Proton acceptor of the active site.

This sequence belongs to the IlvD/Edd family. As to quaternary structure, homodimer. [2Fe-2S] cluster serves as cofactor. The cofactor is Mg(2+).

The enzyme catalyses (2R)-2,3-dihydroxy-3-methylbutanoate = 3-methyl-2-oxobutanoate + H2O. It catalyses the reaction (2R,3R)-2,3-dihydroxy-3-methylpentanoate = (S)-3-methyl-2-oxopentanoate + H2O. Its pathway is amino-acid biosynthesis; L-isoleucine biosynthesis; L-isoleucine from 2-oxobutanoate: step 3/4. The protein operates within amino-acid biosynthesis; L-valine biosynthesis; L-valine from pyruvate: step 3/4. Its function is as follows. Functions in the biosynthesis of branched-chain amino acids. Catalyzes the dehydration of (2R,3R)-2,3-dihydroxy-3-methylpentanoate (2,3-dihydroxy-3-methylvalerate) into 2-oxo-3-methylpentanoate (2-oxo-3-methylvalerate) and of (2R)-2,3-dihydroxy-3-methylbutanoate (2,3-dihydroxyisovalerate) into 2-oxo-3-methylbutanoate (2-oxoisovalerate), the penultimate precursor to L-isoleucine and L-valine, respectively. The sequence is that of Dihydroxy-acid dehydratase from Azorhizobium caulinodans (strain ATCC 43989 / DSM 5975 / JCM 20966 / LMG 6465 / NBRC 14845 / NCIMB 13405 / ORS 571).